We begin with the raw amino-acid sequence, 199 residues long: Guanylate kinase (199 aa).

The Guanylate kinase-like domain occupies 20–198 (GKLIVLTGPS…ALQAIEVALF (179 aa)). Residue 27 to 34 (GPSGVGKG) coordinates ATP.

This sequence belongs to the guanylate kinase family.

It is found in the cytoplasm. It catalyses the reaction GMP + ATP = GDP + ADP. In terms of biological role, essential for recycling GMP and indirectly, cGMP. The sequence is that of Guanylate kinase from Trichormus variabilis (strain ATCC 29413 / PCC 7937) (Anabaena variabilis).